The chain runs to 776 residues: G protein-regulated inducer of neurite outgrowth 3 (776 aa).

2 disordered regions span residues 1-37 (MGTV…RHRP) and 68-312 (VCEH…IKEV). A compositionally biased stretch (low complexity) spans 101–118 (QLPGSSQPAASAPSSAAG). Polar residues-rich tracts occupy residues 129–161 (PANQ…SQRT) and 193–203 (ETIQGTVQTPV). A compositionally biased stretch (low complexity) spans 208-217 (VVSHSSSPVG). Positions 242-274 (SGCSENKQPSVTASGPQGTTSVTPQPTPLTSEP) are enriched in polar residues. Phosphoserine occurs at positions 332 and 365. Disordered regions lie at residues 518 to 637 (ISKA…RPSR) and 723 to 748 (LIKT…LRGR). Residues 520 to 552 (KADHSGSLDPTNKGDAREKKPASPQVVKEKEST) are compositionally biased toward basic and acidic residues. Residues 566–580 (PKSQESGGTESAANP) show a composition bias toward polar residues. Residues 604–620 (SLSLPSDPMGDSSPGSG) are compositionally biased toward low complexity. The segment covering 725-742 (KTQNSQTRRSISSDTSSN) has biased composition (polar residues).

Functionally, may be involved in neurite outgrowth. In Homo sapiens (Human), this protein is G protein-regulated inducer of neurite outgrowth 3 (GPRIN3).